Reading from the N-terminus, the 351-residue chain is Vacuolar protein sorting-associated protein 72 homolog (351 aa).

Residues 1–136 are disordered; it reads MAASRSRRNN…DSGRKSIRTS (136 aa). The segment covering 36–72 has biased composition (acidic residues); sequence QEDEEDKEYEQKDEEEDVVDSDFSIDENDEPVSDQEE. Residues Ser-56, Ser-59, and Ser-68 each carry the phosphoserine modification. Residues 87-100 show a composition bias toward basic and acidic residues; sequence AYKETKPAVKKETK. Over residues 105-121 the composition is skewed to basic residues; sequence LHKKRPGGGVTKRRPRP. Residues 142–202 are a coiled coil; it reads QATKIRLKEL…QKMELEKKKS (61 aa). Residues 156–208 mediate DNA binding; it reads KRKKKKVRVEDYMPTQEELLEEAKITEEENTKSLEKFQKMELEKKKSRPTKRT.

It belongs to the VPS72/YL1 family. As to quaternary structure, interacts with H2AV. Component of the Tip60 chromatin-remodeling complex which contains the catalytic subunit Tip60 and the subunits Domino, Tra1, Brd8, E(Pc), DMAP1, Pontin, Reptin, Ing3, Act87E, BAP55, Mrg15, MrgBP, Gas41 and YL-1.

It localises to the nucleus. Its function is as follows. Part of the Tip60 chromatin-remodeling complex which is involved in DNA repair. Upon induction of DNA double-strand breaks, this complex acetylates phosphorylated H2AV in nucleosomes and exchanges it with unmodified H2AV. The polypeptide is Vacuolar protein sorting-associated protein 72 homolog (YL-1) (Drosophila melanogaster (Fruit fly)).